The primary structure comprises 503 residues: Cytochrome P450 11B1, mitochondrial (503 aa).

The N-terminal 24 residues, 1–24 (MALRAKAEVCMAAPWLSLQRARAL), are a transit peptide targeting the mitochondrion. Residue C450 participates in heme binding.

The protein belongs to the cytochrome P450 family. It depends on heme as a cofactor.

It localises to the mitochondrion inner membrane. It catalyses the reaction a steroid + 2 reduced [adrenodoxin] + O2 + 2 H(+) = an 11beta-hydroxysteroid + 2 oxidized [adrenodoxin] + H2O. The catalysed reaction is 11-deoxycortisol + 2 reduced [adrenodoxin] + O2 + 2 H(+) = cortisol + 2 oxidized [adrenodoxin] + H2O. The enzyme catalyses 21-hydroxyprogesterone + 2 reduced [adrenodoxin] + O2 + 2 H(+) = corticosterone + 2 oxidized [adrenodoxin] + H2O. It carries out the reaction 21-hydroxyprogesterone + 2 reduced [adrenodoxin] + O2 + 2 H(+) = 18-hydroxy-11-deoxycorticosterone + 2 oxidized [adrenodoxin] + H2O. It catalyses the reaction 21-hydroxyprogesterone + 2 reduced [adrenodoxin] + O2 + 2 H(+) = 19-hydroxy-11-deoxycorticosterone + 2 oxidized [adrenodoxin] + H2O. The catalysed reaction is cortisol + 2 reduced [adrenodoxin] + O2 + 2 H(+) = 18-hydroxycortisol + 2 oxidized [adrenodoxin] + H2O. The enzyme catalyses 11-deoxycortisol + 2 reduced [adrenodoxin] + O2 + 2 H(+) = 18-hydroxy-11-deoxycortisol + 2 oxidized [adrenodoxin] + H2O. The protein operates within steroid biosynthesis; glucocorticoid biosynthesis. It functions in the pathway steroid hormone biosynthesis. Functionally, a cytochrome P450 monooxygenase involved in the biosynthesis of adrenal corticoids. Catalyzes a variety of reactions that are essential for many species, including detoxification, defense, and the formation of endogenous chemicals like steroid hormones. Steroid 11beta, 18- and 19-hydroxylase with preferred regioselectivity at 11beta, then 18, and lastly 19. Catalyzes the hydroxylation of 11-deoxycortisol and 11-deoxycorticosterone (21-hydroxyprogesterone) at 11beta position, yielding cortisol or corticosterone, respectively, but cannot produce aldosterone. Mechanistically, uses molecular oxygen inserting one oxygen atom into a substrate for hydroxylation and reducing the second into a water molecule. Two electrons are provided by NADPH via a two-protein mitochondrial transfer system comprising flavoprotein FDXR (adrenodoxin/ferredoxin reductase) and nonheme iron-sulfur protein FDX1 or FDX2 (adrenodoxin/ferredoxin). Due to its lack of 18-oxidation activity, it is incapable of generating aldosterone. Could also be involved in the androgen metabolic pathway. In Papio hamadryas ursinus (Chacma baboon), this protein is Cytochrome P450 11B1, mitochondrial (CYP11B1).